The primary structure comprises 550 residues: Chaperonin GroEL (550 aa).

ATP-binding positions include 30–33 (TLGP), Lys-51, 87–91 (DGTTT), Gly-415, 479–481 (NAA), and Asp-495. The segment at 525-550 (PKDEKSSSELNSAPGNGMGGGMGGMM) is disordered. Residues 540-550 (NGMGGGMGGMM) show a composition bias toward gly residues.

This sequence belongs to the chaperonin (HSP60) family. As to quaternary structure, forms a cylinder of 14 subunits composed of two heptameric rings stacked back-to-back. Interacts with the co-chaperonin GroES.

It is found in the cytoplasm. The catalysed reaction is ATP + H2O + a folded polypeptide = ADP + phosphate + an unfolded polypeptide.. Together with its co-chaperonin GroES, plays an essential role in assisting protein folding. The GroEL-GroES system forms a nano-cage that allows encapsulation of the non-native substrate proteins and provides a physical environment optimized to promote and accelerate protein folding. The protein is Chaperonin GroEL of Buchnera aphidicola subsp. Cinara cedri (strain Cc).